The sequence spans 856 residues: PR domain zinc finger protein 1 (856 aa).

In terms of domain architecture, SET spans 115 to 233 (PRNLLFKYAA…ANQELLVWYC (119 aa)). 2 disordered regions span residues 357 to 399 (THSP…APGL) and 532 to 571 (GAAASMKDESSPPSGSPTAGTAATSEHVVQPKATSSVMAA). Composition is skewed to low complexity over residues 373–393 (SSPEQSLKSSSPHSSPGNTVS) and 542–556 (SPPSGSPTAGTAATS). The interaction with PIAS1 stretch occupies residues 558–605 (HVVQPKATSSVMAAPSTDGAMNLIKNKRNMTGYKTLPYPLKKQNGKIK). 4 C2H2-type zinc fingers span residues 606–628 (YECNVCAKTFGQLSNLKVHLRVH), 634–656 (FKCQTCNKGFTQLAHLQKHYLVH), 662–684 (HECQVCHKRFSSTSNLKTHLRLH), and 690–712 (YQCKVCPAKFTQFVHLKLHKRLH). A Glycyl lysine isopeptide (Lys-Gly) (interchain with G-Cter in SUMO1); alternate cross-link involves residue Lys-847. Lys-847 participates in a covalent cross-link: Glycyl lysine isopeptide (Lys-Gly) (interchain with G-Cter in SUMO2); alternate.

This sequence belongs to the class V-like SAM-binding methyltransferase superfamily. In terms of assembly, interacts with PRMT5. Interacts with FBXO10. Interacts with FBXO11. Interacts with multiple nuclear sumoylation E3 ligases, including CBX4, PIAS1, PIAS2, PIAS3, PIAS4, PML and RNF4, but not RANBP2. Interacts with LDB1, SMARCD3 and SMARCC1. Interacts with EEIG1; following TNFSF11/RANKL stimulation in bone marrow-derived macrophages, the interaction promotes the binding of PRDM1/BLIMP1 to the gene promoter of IRF8. Post-translationally, sumoylation at Lys-847 by PIAS1 increases transcriptional repressor activity, and is critical for plasma cell differentiation. Can be sumoylated with SUMO1 and SUMO2 by PML. Degradation of the wild-type protein mostly depends upon sumoylation, rather than ubiquitination. Desumoylated by SENP1 and SENP6. Ubiquitinated by SCF(FBXO11), leading to its degradation by the proteasome. Expressed in bone marrow macrophages (at protein level). Expressed in innate lymphocytes, including tissue-resident conventional natural killer (cNK) cells in liver. Expressed also weakly in tissue-resident natural killer (trNK) and natural killer T (NKT) cells in liver. In terms of tissue distribution, expressed in bone marrow, spleen and lymph node but not in brain, heart, kidney, liver, ovary or muscle. Weak expression detected in the lung. As to expression, expressed only in the yolk sac. Expressed in embryo, yolk sac, placenta, splenocytes, and activated T-cells.

It localises to the nucleus. The protein localises to the cytoplasm. In terms of biological role, transcription factor that mediates a transcriptional program in various innate and adaptive immune tissue-resident lymphocyte T cell types such as tissue-resident memory T (Trm), natural killer (trNK) and natural killer T (NKT) cells and negatively regulates gene expression of proteins that promote the egress of tissue-resident T-cell populations from non-lymphoid organs. Plays a role in the development, retention and long-term establishment of adaptive and innate tissue-resident lymphocyte T cell types in non-lymphoid organs, such as the skin and gut, but also in other nonbarrier tissues like liver and kidney, and therefore may provide immediate immunological protection against reactivating infections or viral reinfection. Binds specifically to the PRDI element in the promoter of the beta-interferon gene. Drives the maturation of B-lymphocytes into Ig secreting cells. Associates with the transcriptional repressor ZNF683 to chromatin at gene promoter regions. Binds to the promoter and acts as a transcriptional repressor of IRF8, thereby promotes transcription of osteoclast differentiation factors such as NFATC1 and EEIG1. This Mus musculus (Mouse) protein is PR domain zinc finger protein 1 (Prdm1).